Reading from the N-terminus, the 705-residue chain is Elongation factor G (705 aa).

In terms of domain architecture, tr-type G spans 6–282 (NKVRNIGIMA…AVVDFLPSPL (277 aa)). GTP-binding positions include 15-22 (AHIDAGKT), 79-83 (DTPGH), and 133-136 (NKMD).

It belongs to the TRAFAC class translation factor GTPase superfamily. Classic translation factor GTPase family. EF-G/EF-2 subfamily.

It is found in the cytoplasm. Catalyzes the GTP-dependent ribosomal translocation step during translation elongation. During this step, the ribosome changes from the pre-translocational (PRE) to the post-translocational (POST) state as the newly formed A-site-bound peptidyl-tRNA and P-site-bound deacylated tRNA move to the P and E sites, respectively. Catalyzes the coordinated movement of the two tRNA molecules, the mRNA and conformational changes in the ribosome. The sequence is that of Elongation factor G from Corynebacterium glutamicum (strain ATCC 13032 / DSM 20300 / JCM 1318 / BCRC 11384 / CCUG 27702 / LMG 3730 / NBRC 12168 / NCIMB 10025 / NRRL B-2784 / 534).